Consider the following 363-residue polypeptide: MESIFHERQEGSLCAQHCLNNLLQGEYFSPVELSSIAQQLDEEERMRMAEGGVSSEEYRTFLQQPSVNMDDSGFFSIQVISNALKVWGLELILFNSPEYQRLGIDPINEKSFICNYKEHWFTVRKLGKQWFNLNSLLMGPELISDTYLALFLAQLQQEGYSIFVVKGDLPDCEADQLLQMIRVQQVQRPKLIGEETAQSRDQRLPRSDVDQAIEVSHPFDGTGMLDEDEENFQRALALSRQEIDMEDEEADLRRAIQLSMQGSRQSEFSNSLPQNASQPPHTSQTDSLSSEDLRRRRQAYFEKQQQQLQQQDLTLNLHDKPTINSSTLEADPGGDMSEEDMLQAAMNMSLESARNHLSTEEKK.

A Josephin domain is found at M1–M180. Catalysis depends on C14, which acts as the Nucleophile. The active-site Proton acceptor is H119. N134 is an active-site residue. The segment covering I192–V209 has biased composition (basic and acidic residues). Residues I192 to A212 are disordered. 3 UIM domains span residues E227–E246, D247–S266, and S337–H356. Residues M260–S290 are compositionally biased toward polar residues. Residues M260–K363 are disordered. The span at A353–K363 shows a compositional bias: basic and acidic residues.

As to expression, widely expressed.

It is found in the nucleus matrix. It localises to the nucleus. Its subcellular location is the lysosome membrane. It carries out the reaction Thiol-dependent hydrolysis of ester, thioester, amide, peptide and isopeptide bonds formed by the C-terminal Gly of ubiquitin (a 76-residue protein attached to proteins as an intracellular targeting signal).. Its function is as follows. Deubiquitinating enzyme involved in protein homeostasis maintenance, transcription, cytoskeleton regulation, myogenesis and degradation of misfolded chaperone substrates. Binds long polyubiquitin chains and trims them, while it has weak or no activity against chains of 4 or less ubiquitins. Involved in degradation of misfolded chaperone substrates via its interaction with STUB1/CHIP: recruited to monoubiquitinated STUB1/CHIP, and restricts the length of ubiquitin chain attached to STUB1/CHIP substrates and preventing further chain extension. Interacts with key regulators of transcription and represses transcription: acts as a histone-binding protein that regulates transcription. Acts as a negative regulator of mTORC1 signaling in response to amino acid deprivation by mediating deubiquitination of RHEB, thereby promoting RHEB inactivation by the TSC-TBC complex. Regulates autophagy via the deubiquitination of 'Lys-402' of BECN1 leading to the stabilization of BECN1. The sequence is that of Ataxin-3 (ATXN3) from Gallus gallus (Chicken).